We begin with the raw amino-acid sequence, 334 residues long: Ketol-acid reductoisomerase (NADP(+)) (334 aa).

Residues 2–181 (TKVYYDETVT…GATRAGVIET (180 aa)) form the KARI N-terminal Rossmann domain. Residues 25 to 28 (YGSQ), Arg48, Ser52, and 82 to 85 (DEIQ) each bind NADP(+). The active site involves His107. Position 133 (Gly133) interacts with NADP(+). The KARI C-terminal knotted domain occupies 182 to 327 (TFKEETETDL…RELREMMPFI (146 aa)). Positions 190, 194, 226, and 230 each coordinate Mg(2+). Substrate is bound at residue Ser251.

Belongs to the ketol-acid reductoisomerase family. Mg(2+) serves as cofactor.

The enzyme catalyses (2R)-2,3-dihydroxy-3-methylbutanoate + NADP(+) = (2S)-2-acetolactate + NADPH + H(+). It catalyses the reaction (2R,3R)-2,3-dihydroxy-3-methylpentanoate + NADP(+) = (S)-2-ethyl-2-hydroxy-3-oxobutanoate + NADPH + H(+). Its pathway is amino-acid biosynthesis; L-isoleucine biosynthesis; L-isoleucine from 2-oxobutanoate: step 2/4. It functions in the pathway amino-acid biosynthesis; L-valine biosynthesis; L-valine from pyruvate: step 2/4. Functionally, involved in the biosynthesis of branched-chain amino acids (BCAA). Catalyzes an alkyl-migration followed by a ketol-acid reduction of (S)-2-acetolactate (S2AL) to yield (R)-2,3-dihydroxy-isovalerate. In the isomerase reaction, S2AL is rearranged via a Mg-dependent methyl migration to produce 3-hydroxy-3-methyl-2-ketobutyrate (HMKB). In the reductase reaction, this 2-ketoacid undergoes a metal-dependent reduction by NADPH to yield (R)-2,3-dihydroxy-isovalerate. This Staphylococcus epidermidis (strain ATCC 35984 / DSM 28319 / BCRC 17069 / CCUG 31568 / BM 3577 / RP62A) protein is Ketol-acid reductoisomerase (NADP(+)).